A 575-amino-acid chain; its full sequence is Arginine--tRNA ligase (575 aa).

Residues 131-141 (ANPNGPLHIGH) carry the 'HIGH' region motif.

This sequence belongs to the class-I aminoacyl-tRNA synthetase family.

It is found in the cytoplasm. The catalysed reaction is tRNA(Arg) + L-arginine + ATP = L-arginyl-tRNA(Arg) + AMP + diphosphate. The polypeptide is Arginine--tRNA ligase (Methanobrevibacter smithii (strain ATCC 35061 / DSM 861 / OCM 144 / PS)).